Here is a 1056-residue protein sequence, read N- to C-terminus: PH and SEC7 domain-containing protein 4 (1056 aa).

The span at 25–42 (LEPHPGECPRETCSHEDP) shows a compositional bias: basic and acidic residues. Disordered stretches follow at residues 25–71 (LEPH…SGVE), 87–149 (CQEQ…QNRS), 195–239 (LPGD…QWGA), 340–362 (GAPA…APSA), 388–533 (VQPW…GDVQ), and 546–581 (LRTP…LANG). Polar residues-rich tracts occupy residues 88–99 (QEQTRATDPPES) and 128–137 (NTASPGSPVN). A phosphoserine mark is found at S131, S134, and S143. Residues 207–220 (ENEDSGEDSSEPEG) show a composition bias toward acidic residues. A Phosphoserine modification is found at S413. Positions 414-423 (QDRDEREGGH) are enriched in basic and acidic residues. Over residues 438–456 (RSPASSPEPSSPESESRGP) the composition is skewed to low complexity. A phosphoserine mark is found at S448, S469, and S491. Composition is skewed to polar residues over residues 466-476 (QEGSPQLQHHS) and 486-502 (DASQ…QPSS). Residues 504–522 (KKKEAGEAPKPGEEVKSEG) are compositionally biased toward basic and acidic residues. Residues 544–736 (ENLRTPMNSS…KALYWSIRSE (193 aa)) enclose the SEC7 domain. Residues 548–567 (TPMNSSWLPGSPMPQAQSPE) show a composition bias toward polar residues. Residues 776-892 (PTYKQGILAR…WIARINLAAA (117 aa)) enclose the PH domain. A coiled-coil region spans residues 921-976 (SSLEEQHRSHENCLDAAADDLLDLQRNLPERRGRGRELEEHRLRKEYLEYEKTRYE). The disordered stretch occupies residues 1004–1056 (AGGTREPKLSLKKSHSSPSLHQDEAPTTAKVKRNISERRTYRKIIPKRNRNQL). Phosphoserine occurs at positions 1019 and 1022. Residues 1043–1056 (TYRKIIPKRNRNQL) show a composition bias toward basic residues.

As to expression, widely expressed. Highest levels of expression are found in placenta, pancreas, spleen, thymus and peripheral blood.

It localises to the cell membrane. The protein resides in the cell projection. The protein localises to the ruffle membrane. In terms of biological role, guanine nucleotide exchange factor for ARF6 and ARL14/ARF7. Through ARL14 activation, controls the movement of MHC class II-containing vesicles along the actin cytoskeleton in dendritic cells. Involved in membrane recycling. Interacts with several phosphatidylinositol phosphate species, including phosphatidylinositol 3,4-bisphosphate, phosphatidylinositol 3,5-bisphosphate and phosphatidylinositol 4,5-bisphosphate. The protein is PH and SEC7 domain-containing protein 4 (PSD4) of Homo sapiens (Human).